Consider the following 146-residue polypeptide: MSEIKRLEINYKTDELFENFRAFGNKDLYMVNELNGQMIDASSDSPFYGIFVGDQLGARMALLKKGDVEEIYFPDFEDYILLWKLEVLPKYQNRGYASELIDFAKSFNMPIKAIGRNDSKDFFLHHGFTDVEAKNIEGHDVLLWKP.

Residues 7 to 146 form the N-acetyltransferase domain; it reads LEINYKTDEL…EGHDVLLWKP (140 aa).

This is an uncharacterized protein from Staphylococcus aureus (strain COL).